An 89-amino-acid chain; its full sequence is Neurotoxin LmNaTx28 (89 aa).

A signal peptide spans 1-18 (MNLPTVLCIIALILGVRS). The 66-residue stretch at 20-85 (KNGFFTKLGK…VADSSEKACQ (66 aa)) folds into the LCN-type CS-alpha/beta domain. 4 disulfide bridges follow: C33-C57, C43-C62, C47-C64, and C58-C84.

The protein belongs to the long (4 C-C) scorpion toxin superfamily. Sodium channel inhibitor family. Beta subfamily. Expressed by the venom gland.

The protein resides in the secreted. Its function is as follows. Binds voltage-independently at site-4 of sodium channels (Nav) and shift the voltage of activation toward more negative potentials thereby affecting sodium channel activation and promoting spontaneous and repetitive firing. This chain is Neurotoxin LmNaTx28, found in Lychas mucronatus (Chinese swimming scorpion).